The primary structure comprises 214 residues: Rac-like GTP-binding protein 1 (214 aa).

Residues 17–24, 20–25, threonine 42, 64–68, glycine 67, 122–125, 123–125, and 164–165 each bind GTP; these read GDGAVGKT, AVGKTC, DTAGQ, TKLD, KLD, and SK. The Effector region signature appears at 39–47; sequence YIPTVFDNF.

It belongs to the small GTPase superfamily. Rho family. May interact with MPK1/MAPK6. Binds to RBOHB, preferentially in the GTP-bound form. Interacts with CCR1 in a GTP-dependent manner. Post-translationally, may be palmitoylated.

It is found in the cytoplasm. Its subcellular location is the membrane. Functionally, small GTPase playing a general role in disease resistance signaling pathway. Acts downstream of heterotrimeric G protein alpha subunit. Regulates cell death and reactive oxygen species production, probably through NADPH oxidase. Also involved in sphingolipid elicitor (SE)-dependent defense signaling. Activates phytoalexin production and alters defense-related genes. Down-regulates metallothionein 2b, a reactive oxygen scavenger. May control lignin synthesis through regulation of both NADPH oxidase and CCR1 activities during defense responses. Stimulates lignin synthesis in suspension cell culture. This Oryza sativa subsp. japonica (Rice) protein is Rac-like GTP-binding protein 1 (RAC1).